The chain runs to 179 residues: Large ribosomal subunit protein uL5 (179 aa).

This sequence belongs to the universal ribosomal protein uL5 family. In terms of assembly, part of the 50S ribosomal subunit; part of the 5S rRNA/L5/L18/L25 subcomplex. Contacts the 5S rRNA and the P site tRNA. Forms a bridge to the 30S subunit in the 70S ribosome.

In terms of biological role, this is one of the proteins that bind and probably mediate the attachment of the 5S RNA into the large ribosomal subunit, where it forms part of the central protuberance. In the 70S ribosome it contacts protein S13 of the 30S subunit (bridge B1b), connecting the 2 subunits; this bridge is implicated in subunit movement. Contacts the P site tRNA; the 5S rRNA and some of its associated proteins might help stabilize positioning of ribosome-bound tRNAs. The chain is Large ribosomal subunit protein uL5 from Geotalea daltonii (strain DSM 22248 / JCM 15807 / FRC-32) (Geobacter daltonii).